A 513-amino-acid chain; its full sequence is ATP synthase subunit alpha (513 aa).

Residue 169–176 (GDRQTGKS) participates in ATP binding.

Belongs to the ATPase alpha/beta chains family. In terms of assembly, F-type ATPases have 2 components, CF(1) - the catalytic core - and CF(0) - the membrane proton channel. CF(1) has five subunits: alpha(3), beta(3), gamma(1), delta(1), epsilon(1). CF(0) has three main subunits: a(1), b(2) and c(9-12). The alpha and beta chains form an alternating ring which encloses part of the gamma chain. CF(1) is attached to CF(0) by a central stalk formed by the gamma and epsilon chains, while a peripheral stalk is formed by the delta and b chains.

It localises to the cell inner membrane. The catalysed reaction is ATP + H2O + 4 H(+)(in) = ADP + phosphate + 5 H(+)(out). Its function is as follows. Produces ATP from ADP in the presence of a proton gradient across the membrane. The alpha chain is a regulatory subunit. The chain is ATP synthase subunit alpha from Sodalis glossinidius (strain morsitans).